We begin with the raw amino-acid sequence, 503 residues long: Trehalose-6-phosphate synthase (503 aa).

A compositionally biased stretch (polar residues) spans 1 to 14 (MTDQSGNGVRSGSA). Positions 1–20 (MTDQSGNGVRSGSASEAPPS) are disordered. A D-glucose 6-phosphate-binding site is contributed by arginine 31. 51 to 52 (GG) lines the UDP-alpha-D-glucose pocket. D-glucose 6-phosphate-binding residues include tyrosine 109 and aspartate 163. UDP-alpha-D-glucose contacts are provided by arginine 305 and lysine 310. Residue arginine 343 coordinates D-glucose 6-phosphate. 408-412 (LVAKE) is a binding site for UDP-alpha-D-glucose.

The protein belongs to the glycosyltransferase 20 family. Homotetramer.

The catalysed reaction is ADP-alpha-D-glucose + D-glucose 6-phosphate = alpha,alpha-trehalose 6-phosphate + ADP + H(+). The enzyme catalyses CDP-alpha-D-glucose + D-glucose 6-phosphate = alpha,alpha-trehalose 6-phosphate + CDP + H(+). It carries out the reaction GDP-alpha-D-glucose + D-glucose 6-phosphate = alpha,alpha-trehalose 6-phosphate + GDP + H(+). It catalyses the reaction TDP-alpha-D-glucose + D-glucose 6-phosphate = 5-methyl-UDP + alpha,alpha-trehalose 6-phosphate + H(+). The catalysed reaction is D-glucose 6-phosphate + UDP-alpha-D-glucose = alpha,alpha-trehalose 6-phosphate + UDP + H(+). Its pathway is glycan biosynthesis; trehalose biosynthesis. Its function is as follows. Probably involved in the osmoprotection via the biosynthesis of trehalose and in the production of glycogen and alpha-glucan via the TreS-Pep2 branch involved in the biosynthesis of maltose-1-phosphate (M1P). Catalyzes the transfer of glucose from UDP-glucose (UDP-Glc) to D-glucose 6-phosphate (Glc-6-P) to form trehalose-6-phosphate. Probably also able to use ADP-Glc, CDP-Glc, GDP-Glc and TDP-Glc as glucosyl donors. This Mycolicibacterium gilvum (strain PYR-GCK) (Mycobacterium gilvum (strain PYR-GCK)) protein is Trehalose-6-phosphate synthase.